The chain runs to 155 residues: Ribosomal RNA large subunit methyltransferase H (155 aa).

Residues L72, G103, and 122–127 (LSPLTL) contribute to the S-adenosyl-L-methionine site.

The protein belongs to the RNA methyltransferase RlmH family. Homodimer.

It is found in the cytoplasm. It catalyses the reaction pseudouridine(1915) in 23S rRNA + S-adenosyl-L-methionine = N(3)-methylpseudouridine(1915) in 23S rRNA + S-adenosyl-L-homocysteine + H(+). Functionally, specifically methylates the pseudouridine at position 1915 (m3Psi1915) in 23S rRNA. The protein is Ribosomal RNA large subunit methyltransferase H of Haemophilus ducreyi (strain 35000HP / ATCC 700724).